The sequence spans 54 residues: Secreted virulence factor MC69 (54 aa).

The signal sequence occupies residues 1–18 (MKFTLALLTTLCASLASA). Residues Cys-38 and Cys-48 are joined by a disulfide bond.

It belongs to the MC69 virulence factor family.

The protein resides in the secreted. Its function is as follows. Secreted protein required for appressorial penetration of intact host epidermal cells and for pathogenicity. In Colletotrichum orbiculare (strain 104-T / ATCC 96160 / CBS 514.97 / LARS 414 / MAFF 240422) (Cucumber anthracnose fungus), this protein is Secreted virulence factor MC69.